A 679-amino-acid chain; its full sequence is F-box/LRR-repeat protein 5 (679 aa).

Residues 1–159 (MAPFPDEVDV…IKQQVMLQHC (159 aa)) are hemerythrin-like. The Fe(3+) site is built by His15, His57, Glu58, Glu61, His80, His126, and Glu130. The region spanning 205 to 251 (RVSVSSLPQELLLRIFRFLGPQDLCRCAQVCSVWTQVTRTGSLWRHL) is the F-box domain. 7 LRR repeats span residues 316-342 (EKLLLNGIIQKLLPAVGSSVRSLSLAY), 343-367 (SSTLSSKMVRQMLSLCPNLTHLDLT), 368-395 (QTDVSDSAFDSWCALGACGTLQHLDLSG), 396-426 (CDKITDRTLKILSVGLGDSSTPSPAHKLLQA), 565-595 (CWFEGQSCAEHHNRTDQSGAQRALRFLSLSG), 596-623 (CHQITDLGLRCVCLRGGLPLLEHLNLSG), and 624-649 (CPLITGAGLQEVVSASPALNIEHFYY). Residues Cys650, Cys664, Cys674, and Cys675 each coordinate [2Fe-2S] cluster.

As to quaternary structure, part of a SCF (SKP1-cullin-F-box) protein ligase complex. It depends on [2Fe-2S] cluster as a cofactor. In terms of processing, ubiquitinated upon iron and oxygen depletion, leading to its degradation by the proteasome. Ubiquitination is regulated by the hemerythrin-like region that acts as an oxygen and iron sensor.

The protein resides in the cytoplasm. It localises to the perinuclear region. It is found in the nucleus. It participates in protein modification; protein ubiquitination. Functionally, component of some SCF (SKP1-cullin-F-box) protein ligase complex that plays a central role in iron homeostasis by promoting the ubiquitination and subsequent degradation of ireb2/irp2. Upon high iron and oxygen level, it specifically recognizes and binds ireb2/irp2, promoting its ubiquitination and degradation by the proteasome. This chain is F-box/LRR-repeat protein 5 (fbxl5), found in Danio rerio (Zebrafish).